A 337-amino-acid polypeptide reads, in one-letter code: Dehydrogenase FUB6 (337 aa).

It belongs to the zinc-containing alcohol dehydrogenase family. Quinone oxidoreductase subfamily.

It participates in mycotoxin biosynthesis. Functionally, dehydrogenase; part of the gene cluster that mediates the biosynthesis of fusaric acid, a mycotoxin with low to moderate toxicity to animals and humans, but with high phytotoxic properties. L-aspartate is suggested as fusaric acid amino acid precursor that is activated and further processed to O-acetyl-L-homoserine by cluster enzymes aspartate kinase FUB3 and homoserine O-acetyltransferase FUB5, as well as enzymes of the primary metabolism. The polyketide synthase (PKS) FUB1 generates the triketide trans-2-hexenal which is presumptively released by the hydrolase FUB4 and linked to the NRPS-bound amino acid precursor by NAD(P)-dependent dehydrogenase FUB6. FUB1, FUB4, and the non-canonical NRPS Fub8 may form an enzyme complex. Further processing of the NRPS-bound intermediate might be carried out by FUB6 and the O-acetylhomoserine FUB7, enabling a spontaneous electrocyclization to close the carbon backbone of fusaric acid. Dihydrofusaric acid is likely to be released via reduction by the thioester reductase (TR) domain of FUB8 whereupon the final oxidation to fusaric acid may (also) be performed by the FMN-dependent dehydrogenase FUB9. This Gibberella fujikuroi (strain CBS 195.34 / IMI 58289 / NRRL A-6831) (Bakanae and foot rot disease fungus) protein is Dehydrogenase FUB6.